A 333-amino-acid polypeptide reads, in one-letter code: Arylacetonitrilase (333 aa).

Residues 9–284 enclose the CN hydrolase domain; it reads VRVAVTQAEP…EGIIYADLEM (276 aa). The active-site Proton acceptor is glutamate 49. Lysine 129 is an active-site residue. Cysteine 164 functions as the Nucleophile in the catalytic mechanism.

Belongs to the carbon-nitrogen hydrolase superfamily. Nitrilase family.

The catalysed reaction is a nitrile + 2 H2O = a carboxylate + NH4(+). It catalyses the reaction 4-chlorophenylacetonitrile + 2 H2O = 4-chlorophenylacetate + NH4(+). Nitrilase that hydrolyzes preferentially phenylacetonitrile, (R,S)-mandelonitrile, and 3-indolylacetonitrile. The chain is Arylacetonitrilase from Aspergillus oryzae (strain ATCC 42149 / RIB 40) (Yellow koji mold).